The chain runs to 335 residues: Tetraacyldisaccharide 4'-kinase (335 aa).

51–58 (HVGGAGKT) lines the ATP pocket.

Belongs to the LpxK family.

It carries out the reaction a lipid A disaccharide + ATP = a lipid IVA + ADP + H(+). The protein operates within glycolipid biosynthesis; lipid IV(A) biosynthesis; lipid IV(A) from (3R)-3-hydroxytetradecanoyl-[acyl-carrier-protein] and UDP-N-acetyl-alpha-D-glucosamine: step 6/6. Its function is as follows. Transfers the gamma-phosphate of ATP to the 4'-position of a tetraacyldisaccharide 1-phosphate intermediate (termed DS-1-P) to form tetraacyldisaccharide 1,4'-bis-phosphate (lipid IVA). The polypeptide is Tetraacyldisaccharide 4'-kinase (Bradyrhizobium sp. (strain ORS 278)).